Here is a 154-residue protein sequence, read N- to C-terminus: Superoxide dismutase [Cu-Zn] (154 aa).

Residues H47, H49, and H64 each contribute to the Cu cation site. C58 and C147 are disulfide-bonded. Zn(2+) contacts are provided by H64, H72, H81, and D84. H121 contacts Cu cation. The disordered stretch occupies residues 122-143 (GGTDDLGKGGNEESLKTGNAGP). Positions 123–136 (GTDDLGKGGNEESL) are enriched in basic and acidic residues. Residue R144 participates in substrate binding.

The protein belongs to the Cu-Zn superoxide dismutase family. In terms of assembly, homodimer. Requires Cu cation as cofactor. The cofactor is Zn(2+).

The protein localises to the cytoplasm. The catalysed reaction is 2 superoxide + 2 H(+) = H2O2 + O2. In terms of biological role, destroys radicals which are normally produced within the cells and which are toxic to biological systems. The chain is Superoxide dismutase [Cu-Zn] (SOD1) from Cordyceps militaris (Caterpillar fungus).